Here is a 461-residue protein sequence, read N- to C-terminus: pre-mRNA splicing regulator USH1G (461 aa).

3 ANK repeats span residues 31 to 60 (DGMTPTLWAAYHGNLESLRLIVSRGGDPDK), 64 to 93 (WGNTPLHLAASNGHLHCLSFLVSFGANIWC), and 97 to 126 (DYHTPLDMAAMKGHMECVRYLDSIAAKQSS). The tract at residues 329–368 (LGREDGGLDGAGTPRGRLHSSPSLDDDSLGSANSLQDRSC) is disordered. One can recognise an SAM domain in the interval 385–447 (LEPETSPLET…KILGAVRRRR (63 aa)). Ser-422 bears the Phosphoserine mark.

Part of a complex composed of USH1C, USH1G and MYO7A. Interacts with USH1C (via the first PDZ domain). Interacts with PDZD7. Interacts with CDH23 and PCDH15; these interactions may recruit USH1G to the plasma membrane. Interacts with intraflagellar transport proteins IFT20, IFT52 and IFT57. Interacts with splicing factors SF3B1, PRPF6, PRPF31 and SON. Interacts with the U4/U6.U5 tri-small nuclear ribonucleoprotein (tri-snRNP) complex in the presence of pre-mRNAs. Interacts (via SAM domain) with MAGI2 (via PDZ 6 domain); the interaction is triggered by phosphorylation of USH1G by CK2 and negatively regulates MAGI2-mediated endocytosis. Detected in stereocilia from cochlear hair cells (at protein level). Detected in retinal photoreceptor cell cilia (at protein level). Highly expressed in the cochlea, testis, cerebellum and eye, and low levels in brain, thymus and spleen. Significant signals detected in the neurosensory epithelium of inner ear cochlea and saccule, especially in inner and outer hair cells.

It localises to the cytoplasm. The protein resides in the cytosol. Its subcellular location is the cytoskeleton. The protein localises to the cell membrane. It is found in the cell projection. It localises to the cilium. The protein resides in the nucleus speckle. Its subcellular location is the nucleus. The protein localises to the cajal body. It is found in the microtubule organizing center. It localises to the centrosome. The protein resides in the photoreceptor inner segment. Its function is as follows. Plays a role in pre-mRNA splicing by regulating the release and transfer of U4/U6.U5 tri-small nuclear ribonucleoprotein (tri-snRNP) complexes from their assembly site in Cajal bodies to nuclear speckles, thereby contributing to the assembly of the pre-catalytic spliceosome on target pre-mRNAs. May also participate in recycling of snRNPs back to Cajal bodies during splicing. Plays a role in regulating MAGI2-mediated endocytosis. Anchoring/scaffolding protein that is a part of the functional network formed by USH1C, USH1G, CDH23 and MYO7A that mediates mechanotransduction in cochlear hair cells. Required for normal development and maintenance of cochlear hair cell bundles. Required for normal hearing. In Mus musculus (Mouse), this protein is pre-mRNA splicing regulator USH1G (Ush1g).